The sequence spans 562 residues: NAD-dependent malic enzyme (562 aa).

The active-site Proton donor is the tyrosine 101. Residue arginine 154 coordinates NAD(+). Lysine 172 (proton acceptor) is an active-site residue. A divalent metal cation contacts are provided by glutamate 243, aspartate 244, and aspartate 267. 2 residues coordinate NAD(+): aspartate 267 and asparagine 415.

This sequence belongs to the malic enzymes family. Homotetramer. Mg(2+) is required as a cofactor. Mn(2+) serves as cofactor.

It carries out the reaction (S)-malate + NAD(+) = pyruvate + CO2 + NADH. The catalysed reaction is oxaloacetate + H(+) = pyruvate + CO2. This Shewanella baltica (strain OS155 / ATCC BAA-1091) protein is NAD-dependent malic enzyme.